A 418-amino-acid chain; its full sequence is Nucleoredoxin (418 aa).

The 201-residue stretch at 109 to 309 folds into the Thioredoxin domain; that stretch reads KYKVTSIPSL…ESNAVQLHEG (201 aa).

Belongs to the nucleoredoxin family.

Its subcellular location is the cytoplasm. It localises to the cytosol. The protein resides in the nucleus. The enzyme catalyses [protein]-dithiol + NAD(+) = [protein]-disulfide + NADH + H(+). It catalyses the reaction [protein]-dithiol + NADP(+) = [protein]-disulfide + NADPH + H(+). In terms of biological role, functions as a redox-dependent negative regulator of the Wnt signaling pathway. This is Nucleoredoxin (nxn) from Danio rerio (Zebrafish).